Here is a 116-residue protein sequence, read N- to C-terminus: Iron-sulfur cluster assembly protein CyaY (116 aa).

It belongs to the frataxin family.

Functionally, involved in iron-sulfur (Fe-S) cluster assembly. May act as a regulator of Fe-S biogenesis. In Polaromonas sp. (strain JS666 / ATCC BAA-500), this protein is Iron-sulfur cluster assembly protein CyaY.